The primary structure comprises 314 residues: MAIKRRKVSVIGAGFTGATTALMVAQKELGDVVLVDIPQMEGPTKGKALDMLESTPVQGVDVNITGTSSYEYTKDSDVVVITAGIARKPGMSRDDLVSTNAGIMKAVTKEVVKHSPNAYIIVLTNPADAMTYTVYKESGFPKNRVIGQSGVLDTARFRTFVAQELNLSVEDITGFVLGGHGDDMVPLIRYSYAGGIPLEKLLPQERIDAIVERTRKGGGEIVGLLGNGSAYYAPAASLAEMVEAILKDKKRVLPTIAYLEGEYGYEDIYVGVPTILGGDGIEKVIELDLTDEEKATFAKSIESVRNVMSALPKE.

NAD(+) is bound by residues 12–17 and Asp36; that span reads GAGFTG. Substrate contacts are provided by Arg87 and Arg93. Residues Asn100 and 123–125 contribute to the NAD(+) site; that span reads LTN. Residue Asn125 participates in substrate binding. Ser149 is modified (phosphoserine). Residue Arg156 coordinates substrate. His180 functions as the Proton acceptor in the catalytic mechanism.

It belongs to the LDH/MDH superfamily. MDH type 3 family.

It catalyses the reaction (S)-malate + NAD(+) = oxaloacetate + NADH + H(+). In terms of biological role, catalyzes the reversible oxidation of malate to oxaloacetate. The protein is Malate dehydrogenase of Halalkalibacterium halodurans (strain ATCC BAA-125 / DSM 18197 / FERM 7344 / JCM 9153 / C-125) (Bacillus halodurans).